We begin with the raw amino-acid sequence, 374 residues long: Putative glutamate--cysteine ligase 2-1 (374 aa).

Belongs to the glutamate--cysteine ligase type 2 family. YbdK subfamily.

The catalysed reaction is L-cysteine + L-glutamate + ATP = gamma-L-glutamyl-L-cysteine + ADP + phosphate + H(+). In terms of biological role, ATP-dependent carboxylate-amine ligase which exhibits weak glutamate--cysteine ligase activity. This Saccharopolyspora erythraea (strain ATCC 11635 / DSM 40517 / JCM 4748 / NBRC 13426 / NCIMB 8594 / NRRL 2338) protein is Putative glutamate--cysteine ligase 2-1.